A 277-amino-acid chain; its full sequence is uncharacterized protein (277 aa).

Residues 1-20 are disordered; the sequence is MVTTSPPPTLTNSVQPHPTT.

This is an uncharacterized protein from Acidianus convivator (ATV).